Consider the following 692-residue polypeptide: PTS system glucoside-specific EIICBA component (692 aa).

A PTS EIIC type-1 domain is found at Lys6–Asp430. The next 10 membrane-spanning stretches (helical) occupy residues Ile15–Phe35, Leu84–Met104, Leu140–Leu160, Phe185–Trp205, Leu215–Glu235, Ala287–Ile307, Val318–Pro338, Leu344–Ile364, Val370–Ser390, and Leu398–Ile418. The PTS EIIB type-1 domain occupies Ser441–Ser522. Catalysis depends on Cys463, which acts as the Phosphocysteine intermediate; for EIIB activity. One can recognise a PTS EIIA type-1 domain in the interval Asp563–Asn667. His615 functions as the Tele-phosphohistidine intermediate; for EIIA activity in the catalytic mechanism.

The protein localises to the cell membrane. Inhibited by methyl alpha-D-glucoside, methyl beta-D-glucoside, p-nitrophenyl alpha-D-glucoside, o-nitrophenyl beta-D-glucoside and salicin, but not by 2-deoxyglucose. Its function is as follows. The phosphoenolpyruvate-dependent sugar phosphotransferase system (sugar PTS), a major carbohydrate active -transport system, catalyzes the phosphorylation of incoming sugar substrates concomitantly with their translocation across the cell membrane. This system is involved in alpha- and beta-glucoside transport. Can also transport glucose, but not galactose, fructose, mannose, cellobiose, sucrose, maltose, lactose, melibiose and trehalose, as well as N-acetylglucosamine. This is PTS system glucoside-specific EIICBA component (glcB) from Staphylococcus carnosus (strain TM300).